Reading from the N-terminus, the 330-residue chain is 4-hydroxythreonine-4-phosphate dehydrogenase (330 aa).

Substrate-binding residues include H134 and T135. 3 residues coordinate a divalent metal cation: H164, H209, and H264. Positions 272, 281, and 290 each coordinate substrate.

This sequence belongs to the PdxA family. In terms of assembly, homodimer. Zn(2+) serves as cofactor. Requires Mg(2+) as cofactor. The cofactor is Co(2+).

The protein localises to the cytoplasm. It catalyses the reaction 4-(phosphooxy)-L-threonine + NAD(+) = 3-amino-2-oxopropyl phosphate + CO2 + NADH. The protein operates within cofactor biosynthesis; pyridoxine 5'-phosphate biosynthesis; pyridoxine 5'-phosphate from D-erythrose 4-phosphate: step 4/5. In terms of biological role, catalyzes the NAD(P)-dependent oxidation of 4-(phosphooxy)-L-threonine (HTP) into 2-amino-3-oxo-4-(phosphooxy)butyric acid which spontaneously decarboxylates to form 3-amino-2-oxopropyl phosphate (AHAP). The sequence is that of 4-hydroxythreonine-4-phosphate dehydrogenase from Pseudoalteromonas translucida (strain TAC 125).